The following is a 271-amino-acid chain: MAGAEDGPGQQPELEDDEAASCRRWGAQHAGARELAALYSPGKRFQEWCCVVLCFSLIAHNMAHLLLLARWEHTPLVMLGMVAGALLADFLSGLVHWGADTWGSVELPIVGKAFIRPFREHHIDPTAITRHDFIETNGDNCLLTLLPLLNMAYKFRTQSPEVLEQLYPWECFVFCLIIFGTFTNQIHKWSHTYFGLPCWVVFLQDWHVILPRKHHRIHHVSPHETYFCITTGWLNYPLERMGFWRRLEDIIQALTGEKPRADDMKWAQKIK.

The next 3 membrane-spanning stretches (helical) occupy residues Trp48–Leu68, Pro75–Val95, and Val162–Phe182. The Histidine box-1 signature appears at His187–His191. A Histidine box-2 motif is present at residues His214–His218.

It belongs to the fatty acid desaturase CarF family.

It localises to the endoplasmic reticulum membrane. The enzyme catalyses a 1-(1,2-saturated alkyl)-2-acyl-sn-glycero-3-phosphoethanolamine + 2 Fe(II)-[cytochrome b5] + O2 + 2 H(+) = a 1-O-(1Z-alkenyl)-2-acyl-sn-glycero-3-phosphoethanolamine + 2 Fe(III)-[cytochrome b5] + 2 H2O. It carries out the reaction a 1-O-hexadecyl-2-acyl-sn-glycero-3-phosphoethanolamine + 2 Fe(II)-[cytochrome b5] + O2 + 2 H(+) = a 1-O-(1Z-hexadecenyl)-2-acyl-sn-glycero-3-phosphoethanolamine + 2 Fe(III)-[cytochrome b5] + 2 H2O. It catalyses the reaction a 1-O-octadecyl-2-acyl-sn-glycero-3-phosphoethanolamine + 2 Fe(II)-[cytochrome b5] + O2 + 2 H(+) = a 1-O-(1Z-octadecenyl)-2-acyl-sn-glycero-3-phosphoethanolamine + 2 Fe(III)-[cytochrome b5] + 2 H2O. The catalysed reaction is a 1-O-(9Z-octadecenyl)-2-acyl-sn-glycero-3-phosphoethanolamine + 2 Fe(II)-[cytochrome b5] + O2 + 2 H(+) = a 1-O-(1Z,9Z-octadecadienyl)-2-acyl-sn-glycero-3-phosphoethanolamine + 2 Fe(III)-[cytochrome b5] + 2 H2O. Its pathway is lipid metabolism; fatty acid metabolism. Plasmanylethanolamine desaturase involved in plasmalogen biogenesis in the endoplasmic reticulum membrane. Plasmalogens are glycerophospholipids with a hydrocarbon chain linked by a vinyl ether bond at the glycerol sn-1 position, and are involved in antioxidative and signaling mechanisms. This Bos taurus (Bovine) protein is Plasmanylethanolamine desaturase 1.